A 204-amino-acid chain; its full sequence is MNLCDLFDEIIIGIIDELSDRDKIKFMTTCSRFYYFIDKTKYFDIYDYNKISHLTFIEKIRNIKFYAVNDEIPSNTTHLILSDKYIGSLKNPLPNLKYIKLTNYQYLFLSKNILPHIEIDKNYKNPHIDSSRKEYFDETLIGLRPDCTFWRHNYNIKKSDNETNKITNNHTNKKINNNKKHQNNQKQIIQKNIKFPKILSKHKH.

In terms of domain architecture, F-box spans 1–46; that stretch reads MNLCDLFDEIIIGIIDELSDRDKIKFMTTCSRFYYFIDKTKYFDIY. A disordered region spans residues 161 to 184; the sequence is NETNKITNNHTNKKINNNKKHQNN. Residues 171–183 are compositionally biased toward basic residues; it reads TNKKINNNKKHQN.

This is Putative F-box protein L168 from Acanthamoeba polyphaga (Amoeba).